A 127-amino-acid chain; its full sequence is Holo-[acyl-carrier-protein] synthase (127 aa).

Mg(2+) is bound by residues Asp9 and Glu58.

Belongs to the P-Pant transferase superfamily. AcpS family. It depends on Mg(2+) as a cofactor.

Its subcellular location is the cytoplasm. It catalyses the reaction apo-[ACP] + CoA = holo-[ACP] + adenosine 3',5'-bisphosphate + H(+). Functionally, transfers the 4'-phosphopantetheine moiety from coenzyme A to a Ser of acyl-carrier-protein. The sequence is that of Holo-[acyl-carrier-protein] synthase from Shewanella putrefaciens (strain CN-32 / ATCC BAA-453).